A 1118-amino-acid chain; its full sequence is uncharacterized protein (1118 aa).

Disordered stretches follow at residues 1-69, 1044-1071, and 1090-1118; these read MESG…NGED, PKSVSSSSSLGRKRGRKRENSEEEEKID, and IRPTVNVEEDQNIKTEIEDSDDLEDSFEL. Residues 13-34 are compositionally biased toward acidic residues; that stretch reads DMVEEDNDEDSFEEPACEDSFD. The segment covering 35 to 60 has biased composition (polar residues); that stretch reads SQEASSKANEPQNDSFDEPIQSSVSK. A compositionally biased stretch (acidic residues) spans 1107 to 1118; it reads EDSDDLEDSFEL.

This is an uncharacterized protein from Caenorhabditis elegans.